The primary structure comprises 455 residues: P2X purinoceptor 5 (455 aa).

Residues 1–30 (MGQAAWKGFVLSLFDYKTAKFVVAKSKKVG) are Cytoplasmic-facing. Residues 31 to 50 (LLYRVLQLTILLYLLIWVFL) form a helical membrane-spanning segment. Over 51–339 (IKKSYQDIDT…KFSIIPTVIN (289 aa)) the chain is Extracellular. 69 to 71 (KVK) contacts ATP. An N-linked (GlcNAc...) asparagine glycan is attached at asparagine 77. Disulfide bonds link cysteine 118/cysteine 169, cysteine 129/cysteine 152, and cysteine 135/cysteine 163. Asparagine 157 carries an N-linked (GlcNAc...) asparagine glycan. ATP is bound at residue threonine 189. A glycan (N-linked (GlcNAc...) asparagine) is linked at asparagine 202. Disulfide bonds link cysteine 220–cysteine 229 and cysteine 263–cysteine 272. ATP contacts are provided by residues 294–296 (NFR) and lysine 314. Residues 340-362 (IGSGLALMGAGAFFCDLVLIYLI) traverse the membrane as a helical segment. The Cytoplasmic segment spans residues 363-455 (RKSEFYRDKK…PSQILQTVKT (93 aa)).

This sequence belongs to the P2X receptor family. In terms of assembly, functional P2XRs are organized as homomeric and heteromeric trimers. Homotrimer. Forms heterotrimer with P2RX1. As to expression, expressed in a number of tissues, with highest levels detected in heart and kidney.

Its subcellular location is the cell membrane. It catalyses the reaction Na(+)(in) = Na(+)(out). The catalysed reaction is Ca(2+)(in) = Ca(2+)(out). It carries out the reaction chloride(in) = chloride(out). Its activity is regulated as follows. Activated by ATP. Slowly desensitizing. Not activated by ATP agonist alpha/beta-methylene-ATP. Highly sensitive to the antagonists suramin and PPADS. Functionally, ATP-gated nonselective transmembrane cation channel permeable to potassium, sodium and calcium. Unlike other P2RX receptors, the P2X5 receptor is also permeable to chloride. Acts as an important regulator of inflammatory-related bone loss and osteoclast multinucleation. In Mus musculus (Mouse), this protein is P2X purinoceptor 5.